The following is a 103-amino-acid chain: Small ribosomal subunit protein uS14c (103 aa).

Residues 27 to 56 (SKKKIRSKVSPLSLSEKTKMQEKLQSLPRN) form a disordered region.

The protein belongs to the universal ribosomal protein uS14 family. Part of the 30S ribosomal subunit.

It is found in the plastid. The protein resides in the chloroplast. Its function is as follows. Binds 16S rRNA, required for the assembly of 30S particles. The chain is Small ribosomal subunit protein uS14c from Zea mays (Maize).